The chain runs to 237 residues: Ribosomal RNA small subunit methyltransferase G (237 aa).

Residues Gly-76, Phe-81, 99–101 (DSS), 128–129 (IE), and Arg-147 contribute to the S-adenosyl-L-methionine site.

It belongs to the methyltransferase superfamily. RNA methyltransferase RsmG family.

It is found in the cytoplasm. Specifically methylates the N7 position of a guanine in 16S rRNA. The sequence is that of Ribosomal RNA small subunit methyltransferase G from Prochlorococcus marinus (strain MIT 9312).